Consider the following 394-residue polypeptide: Protein DDI1 homolog 2 (394 aa).

In terms of domain architecture, Ubiquitin-like spans 1 to 81 (MLITVYCVRR…VILRQRETPE (81 aa)). The tract at residues 82-128 (ARPAAPFPGLDFSTIAVPGSSSQPAPSQPQAPPPPPPDTSSFPQGLD) is disordered. Residues 107 to 119 (PSQPQAPPPPPPD) are compositionally biased toward pro residues. The active site involves Asp-247. A Ubiquitin-binding motif is present at residues 371–390 (EEIADRELAEVLQKSAEEAD).

The protein belongs to the DDI1 family. Homodimer.

It is found in the cytoplasm. The protein resides in the cytosol. Its subcellular location is the chromosome. Functionally, aspartic protease that mediates the cleavage of NFE2L1/NRF1 at 'Leu-104', thereby promoting release of NFE2L1/NRF1 from the endoplasmic reticulum membrane. Ubiquitination of NFE2L1/NRF1 is a prerequisite for cleavage, suggesting that DDI2 specifically recognizes and binds ubiquitinated NFE2L1/NRF1. Seems to act as a proteasomal shuttle which links the proteasome and replication fork proteins like RTF2. Required for cellular survival following replication stress. This chain is Protein DDI1 homolog 2 (ddi2), found in Xenopus tropicalis (Western clawed frog).